We begin with the raw amino-acid sequence, 343 residues long: N6-succino-2-amino-2'-deoxyadenylate synthase (343 aa).

S14 (proton acceptor) is an active-site residue. Residues S14, T15, G16, K17, and G18 each contribute to the ATP site. S14 lines the dGMP pocket. Residue S14 participates in Mg(2+) binding. N40 lines the dGMP pocket. The ATP site is built by G42, H43, and T44. Residue G42 coordinates Mg(2+). DGMP contacts are provided by S127, T128, and R142. Q187 contacts ATP. DGMP is bound at residue T202. Mg(2+) is bound at residue T263. L-aspartate-binding residues include T263, V264, and R269. ATP is bound by residues N294, N297, and G330.

The protein belongs to the Caudovirales PurZ family. Requires Mg(2+) as cofactor.

It catalyses the reaction dGMP + L-aspartate + ATP = (2S)-2-amino-2'-deoxyadenylo-succinate + ADP + phosphate + 2 H(+). It participates in purine metabolism. In terms of biological role, involved in the synthesis of the atypical nucleotide dZTP (2-amino-2'-deoxyadenosine-5'-triphosphate). Catalyzes the condensation of aspartate with deoxyguanylate into dSMP (N6-succino-2-amino-2'-deoxyadenylate), which undergoes defumarylation and phosphorylation respectively by host PurB and guanylate/nucleoside diphosphate kinases to give dZTP. dZTP is integrated into the viral genome instead of adenine by the viral DNA polymerase. This Z-base probably completely replaces adenosine and forms a triple bond to the opposite T-base. The resulting non-standard viral DNA is called Z-genome. The chemically modified DNA is probably harder for the host bacteria to digest with nucleases or restriction enzymes. The protein is N6-succino-2-amino-2'-deoxyadenylate synthase of Vibrio phage phiVC8.